The chain runs to 241 residues: uncharacterized protein (241 aa).

A run of 7 helical transmembrane segments spans residues 12–32 (ITEIYFQYVIYILCFGVLLLL), 39–59 (LLWLHLVSILVGLIANYEMKF), 89–109 (VYDVICHTIMVVICYHQICYT), 117–137 (YYTFHLFSVMIIIGALFNCVV), 152–172 (LFEYTTIFQALSTGYWVATML), 180–200 (IHFYSHWIIWIGLMTINWFVY), and 215–235 (YVEAVFIVCTWYSGIISSPLI).

Belongs to the mimivirus L68/R809 family.

The protein localises to the membrane. This is an uncharacterized protein from Acanthamoeba polyphaga mimivirus (APMV).